The primary structure comprises 240 residues: 1-(5-phosphoribosyl)-5-[(5-phosphoribosylamino)methylideneamino] imidazole-4-carboxamide isomerase (240 aa).

The active-site Proton acceptor is the aspartate 8. The active-site Proton donor is aspartate 129.

It belongs to the HisA/HisF family.

The protein resides in the cytoplasm. The enzyme catalyses 1-(5-phospho-beta-D-ribosyl)-5-[(5-phospho-beta-D-ribosylamino)methylideneamino]imidazole-4-carboxamide = 5-[(5-phospho-1-deoxy-D-ribulos-1-ylimino)methylamino]-1-(5-phospho-beta-D-ribosyl)imidazole-4-carboxamide. It functions in the pathway amino-acid biosynthesis; L-histidine biosynthesis; L-histidine from 5-phospho-alpha-D-ribose 1-diphosphate: step 4/9. The sequence is that of 1-(5-phosphoribosyl)-5-[(5-phosphoribosylamino)methylideneamino] imidazole-4-carboxamide isomerase from Listeria monocytogenes serotype 4b (strain CLIP80459).